Consider the following 296-residue polypeptide: Nucleotide-binding protein SPT_1506 (296 aa).

13–20 (GMSGAGKT) is a binding site for ATP. A GTP-binding site is contributed by 63–66 (DMRS).

It belongs to the RapZ-like family.

Its function is as follows. Displays ATPase and GTPase activities. This chain is Nucleotide-binding protein SPT_1506, found in Streptococcus pneumoniae (strain Taiwan19F-14).